Here is a 226-residue protein sequence, read N- to C-terminus: ATP synthase F(0) complex subunit a (226 aa).

6 consecutive transmembrane segments (helical) span residues 6-26 (FASF…IVLF), 68-88 (WTLM…LGLL), 97-117 (QLSM…ITGF), 138-158 (IPML…ALAV), 164-184 (ITAG…LMSI), and 200-222 (TILE…SLYL).

The protein belongs to the ATPase A chain family. Component of the ATP synthase complex composed at least of ATP5F1A/subunit alpha, ATP5F1B/subunit beta, ATP5MC1/subunit c (homooctomer), MT-ATP6/subunit a, MT-ATP8/subunit 8, ATP5ME/subunit e, ATP5MF/subunit f, ATP5MG/subunit g, ATP5MK/subunit k, ATP5MJ/subunit j, ATP5F1C/subunit gamma, ATP5F1D/subunit delta, ATP5F1E/subunit epsilon, ATP5PF/subunit F6, ATP5PB/subunit b, ATP5PD/subunit d, ATP5PO/subunit OSCP. ATP synthase complex consists of a soluble F(1) head domain (subunits alpha(3) and beta(3)) - the catalytic core - and a membrane F(0) domain - the membrane proton channel (subunits c, a, 8, e, f, g, k and j). These two domains are linked by a central stalk (subunits gamma, delta, and epsilon) rotating inside the F1 region and a stationary peripheral stalk (subunits F6, b, d, and OSCP). Interacts with DNAJC30; interaction is direct.

Its subcellular location is the mitochondrion inner membrane. The enzyme catalyses H(+)(in) = H(+)(out). Subunit a, of the mitochondrial membrane ATP synthase complex (F(1)F(0) ATP synthase or Complex V) that produces ATP from ADP in the presence of a proton gradient across the membrane which is generated by electron transport complexes of the respiratory chain. ATP synthase complex consist of a soluble F(1) head domain - the catalytic core - and a membrane F(1) domain - the membrane proton channel. These two domains are linked by a central stalk rotating inside the F(1) region and a stationary peripheral stalk. During catalysis, ATP synthesis in the catalytic domain of F(1) is coupled via a rotary mechanism of the central stalk subunits to proton translocation. With the subunit c (ATP5MC1), forms the proton-conducting channel in the F(0) domain, that contains two crucial half-channels (inlet and outlet) that facilitate proton movement from the mitochondrial intermembrane space (IMS) into the matrix. Protons are taken up via the inlet half-channel and released through the outlet half-channel, following a Grotthuss mechanism. The chain is ATP synthase F(0) complex subunit a from Bos mutus grunniens (Wild yak).